A 364-amino-acid polypeptide reads, in one-letter code: D-alanine--D-alanine ligase (364 aa).

Residues 134-344 (KVLLKSFNIP…YESLVDKLIT (211 aa)) enclose the ATP-grasp domain. 167 to 222 (NNKLNYPVIVKPSVLGSSIGINVAYNVSQIEKYIEEAFEYDLTVVVEKFIKAREIE) contacts ATP. 3 residues coordinate Mg(2+): Asp-297, Glu-311, and Asn-313.

It belongs to the D-alanine--D-alanine ligase family. Requires Mg(2+) as cofactor. The cofactor is Mn(2+).

It is found in the cytoplasm. The enzyme catalyses 2 D-alanine + ATP = D-alanyl-D-alanine + ADP + phosphate + H(+). Its pathway is cell wall biogenesis; peptidoglycan biosynthesis. Functionally, cell wall formation. The polypeptide is D-alanine--D-alanine ligase (Borrelia duttonii (strain Ly)).